A 43-amino-acid polypeptide reads, in one-letter code: Protein PsbN (43 aa).

The helical transmembrane segment at 7–27 threads the bilayer; that stretch reads LSIGIAVVVIAVTGFSIYTAF.

This sequence belongs to the PsbN family.

It localises to the cellular thylakoid membrane. May play a role in photosystem I and II biogenesis. In Picosynechococcus sp. (strain ATCC 27264 / PCC 7002 / PR-6) (Agmenellum quadruplicatum), this protein is Protein PsbN.